The sequence spans 60 residues: Large ribosomal subunit protein bL32 (60 aa).

This sequence belongs to the bacterial ribosomal protein bL32 family.

The chain is Large ribosomal subunit protein bL32 from Streptococcus pneumoniae serotype 4 (strain ATCC BAA-334 / TIGR4).